A 707-amino-acid chain; its full sequence is MNTDTQKHEDAMSTTTPARAPHDDAPSGQQPGQGRVGAGLFEPKQLVKSLPDAFRKLDPRVMAKSPVMFVVLVGSVLTTAFSVTEPGDWFGWTISAWLWLTVLFANLAEAVAEGRGKAQADTLRRAKTDTVARRADGTTVPGTGLTVGDLVVCEAGDVIPGDGDVVEGVASVDESAITGESAPVIRESGGDRSAVTGGTKVLSDRIVVRITTKPGETFIDRMINLVEGAARQKTPNEIALNILLASLTVVFLLACATLPPFADYAGTHLDMIVLVALLVCLIPTTIGALLSAIGIAGMDRLVQRNVLAMSGRAVEAAGDVSTLLLDKTGTITLGNRQAAEFVPVRGVTEAELADAAQLSSLADETPEGRSIVVLAKEKYGLRERHQGELVGAEWIGFTAQTRMSGVDADGRKVRKGAAGSVVAWVRERGGSGTEDADTAVERISAAGGTPLLVAVEDERGARVLGVVHLKDVVKQGMRERFDELRRMGIRTVMITGDNPLTAKAIADEAGVDDYLAEATPEDKMALIKREQAGGKLVAMTGDGTNDAPALAQADVGVAMNTGTSAAKEAGNMVDLDSNPTKLIEIVEIGKQLLITRGALTTFSIANDVAKYFAIIPALFAAVYPGLDKLNIMGLSSPDSAILSAVVFNALIILVLVPLALKGVRYRPTSADRMLRRNLGVYGLGGLVAPFIGIKLIDLIVSLIPGIG.

Residues 1–11 are compositionally biased toward basic and acidic residues; it reads MNTDTQKHEDA. The tract at residues 1-37 is disordered; the sequence is MNTDTQKHEDAMSTTTPARAPHDDAPSGQQPGQGRVG. 4 consecutive transmembrane segments (helical) span residues 61 to 81, 89 to 109, 238 to 258, and 271 to 291; these read VMAKSPVMFVVLVGSVLTTAF, WFGWTISAWLWLTVLFANLAE, IALNILLASLTVVFLLACATL, and MIVLVALLVCLIPTTIGALLS. Residue D326 is the 4-aspartylphosphate intermediate of the active site. Residues D363, E367, 397–404, and K415 contribute to the ATP site; that span reads FTAQTRMS. Residues D542 and D546 each contribute to the Mg(2+) site. 3 consecutive transmembrane segments (helical) span residues 612–632, 640–660, and 683–703; these read FAIIPALFAAVYPGLDKLNIM, AILSAVVFNALIILVLVPLAL, and LGGLVAPFIGIKLIDLIVSLI.

Belongs to the cation transport ATPase (P-type) (TC 3.A.3) family. Type IA subfamily. In terms of assembly, the system is composed of three essential subunits: KdpA, KdpB and KdpC.

Its subcellular location is the cell membrane. The enzyme catalyses K(+)(out) + ATP + H2O = K(+)(in) + ADP + phosphate + H(+). In terms of biological role, part of the high-affinity ATP-driven potassium transport (or Kdp) system, which catalyzes the hydrolysis of ATP coupled with the electrogenic transport of potassium into the cytoplasm. This subunit is responsible for energy coupling to the transport system and for the release of the potassium ions to the cytoplasm. The chain is Potassium-transporting ATPase ATP-binding subunit from Streptomyces coelicolor (strain ATCC BAA-471 / A3(2) / M145).